We begin with the raw amino-acid sequence, 198 residues long: Recombination protein RecR (198 aa).

A C4-type zinc finger spans residues 57-72; it reads CSVCGNITDEDPCEIC. The 96-residue stretch at 80–175 folds into the Toprim domain; sequence EMILVVEQPK…KVTRLAHGLA (96 aa).

This sequence belongs to the RecR family.

Functionally, may play a role in DNA repair. It seems to be involved in an RecBC-independent recombinational process of DNA repair. It may act with RecF and RecO. The protein is Recombination protein RecR of Latilactobacillus sakei subsp. sakei (strain 23K) (Lactobacillus sakei subsp. sakei).